A 909-amino-acid polypeptide reads, in one-letter code: Phosphoenolpyruvate carboxylase (909 aa).

Active-site residues include H138 and K572.

This sequence belongs to the PEPCase type 1 family. Mg(2+) serves as cofactor.

It carries out the reaction oxaloacetate + phosphate = phosphoenolpyruvate + hydrogencarbonate. Its function is as follows. Forms oxaloacetate, a four-carbon dicarboxylic acid source for the tricarboxylic acid cycle. The protein is Phosphoenolpyruvate carboxylase of Lactobacillus delbrueckii subsp. bulgaricus (strain ATCC 11842 / DSM 20081 / BCRC 10696 / JCM 1002 / NBRC 13953 / NCIMB 11778 / NCTC 12712 / WDCM 00102 / Lb 14).